Consider the following 236-residue polypeptide: UPF0502 protein Bamb_4889 (236 aa).

This sequence belongs to the UPF0502 family.

The protein is UPF0502 protein Bamb_4889 of Burkholderia ambifaria (strain ATCC BAA-244 / DSM 16087 / CCUG 44356 / LMG 19182 / AMMD) (Burkholderia cepacia (strain AMMD)).